Reading from the N-terminus, the 217-residue chain is Cytidylate kinase (217 aa).

Residue 10–18 participates in ATP binding; that stretch reads GPAGAGKST.

Belongs to the cytidylate kinase family. Type 1 subfamily.

The protein localises to the cytoplasm. The enzyme catalyses CMP + ATP = CDP + ADP. The catalysed reaction is dCMP + ATP = dCDP + ADP. This Clostridium botulinum (strain ATCC 19397 / Type A) protein is Cytidylate kinase.